Consider the following 407-residue polypeptide: 1-deoxy-D-xylulose 5-phosphate reductoisomerase (407 aa).

NADPH is bound by residues Thr22, Gly23, Ser24, Ile25, Gly48, Asn51, and Asn128. Lys129 is a 1-deoxy-D-xylulose 5-phosphate binding site. An NADPH-binding site is contributed by Glu130. Asp152 lines the Mn(2+) pocket. Residues Ser153, Glu154, Ser178, and His201 each contribute to the 1-deoxy-D-xylulose 5-phosphate site. A Mn(2+)-binding site is contributed by Glu154. Residue Gly207 coordinates NADPH. 1-deoxy-D-xylulose 5-phosphate is bound by residues Ser214, Asn219, Lys220, and Glu223. Glu223 serves as a coordination point for Mn(2+).

The protein belongs to the DXR family. The cofactor is Mg(2+). Mn(2+) is required as a cofactor.

It catalyses the reaction 2-C-methyl-D-erythritol 4-phosphate + NADP(+) = 1-deoxy-D-xylulose 5-phosphate + NADPH + H(+). The protein operates within isoprenoid biosynthesis; isopentenyl diphosphate biosynthesis via DXP pathway; isopentenyl diphosphate from 1-deoxy-D-xylulose 5-phosphate: step 1/6. Functionally, catalyzes the NADPH-dependent rearrangement and reduction of 1-deoxy-D-xylulose-5-phosphate (DXP) to 2-C-methyl-D-erythritol 4-phosphate (MEP). This is 1-deoxy-D-xylulose 5-phosphate reductoisomerase from Mycobacterium avium (strain 104).